A 116-amino-acid polypeptide reads, in one-letter code: MKPSFRNTSPSFRNRSKPYFRNRSKPYFRNRSKPSFRNTSKRFSPNQQSFRKRLSTIRPGEQIDYKNISLINRFISEQGKILSRRTNRLALKQQRLIARAVKQARILCLIPFLSLK.

The segment covering Met-1 to Arg-13 has biased composition (polar residues). The segment at Met-1 to Arg-51 is disordered. Basic residues predominate over residues Asn-14–Pro-34. Polar residues predominate over residues Ser-35–Ser-49.

Belongs to the bacterial ribosomal protein bS18 family. In terms of assembly, part of the 30S ribosomal subunit.

It is found in the plastid. The protein localises to the chloroplast. In Cryptomeria japonica (Japanese cedar), this protein is Small ribosomal subunit protein bS18c.